Consider the following 282-residue polypeptide: (4-alkanoyl-5-oxo-2,5-dihydrofuran-3-yl)methyl phosphate reductase (282 aa).

NADP(+) is bound at residue 6-11; that stretch reads GATGAV.

This sequence belongs to the NmrA-type oxidoreductase family.

It carries out the reaction a [(3S,4R)-4-alkanoyl-5-oxooxolan-3-yl]methyl phosphate + NADP(+) = a (4-alkanoyl-5-oxo-2,5-dihydrofuran-3-yl)methyl phosphate + NADPH + H(+). The catalysed reaction is [(3S,4R)-4-(6-methylheptanoyl)-5-oxooxolan-3-yl]methyl phosphate + NADP(+) = [4-(6-methylheptanoyl)-5-oxo-2H-furan-3-yl]methyl phosphate + NADPH + H(+). Involved in the biosynthesis of A factor (2-isocapryloyl-3R-hydroxymethyl-gamma-butyrolactone), a gamma-butyrolactone autoregulator that triggers secondary metabolism and morphogenesis in Streptomyces. Catalyzes the reduction of the butenolide phosphate produced by nonenzymatic intramolecular condensation of the 8-methyl-3-oxononanoyl-DHAP ester. This chain is (4-alkanoyl-5-oxo-2,5-dihydrofuran-3-yl)methyl phosphate reductase, found in Streptomyces griseus subsp. griseus (strain JCM 4626 / CBS 651.72 / NBRC 13350 / KCC S-0626 / ISP 5235).